Here is a 125-residue protein sequence, read N- to C-terminus: Large ribosomal subunit protein uL24 (125 aa).

Belongs to the universal ribosomal protein uL24 family. As to quaternary structure, part of the 50S ribosomal subunit.

Functionally, one of two assembly initiator proteins, it binds directly to the 5'-end of the 23S rRNA, where it nucleates assembly of the 50S subunit. In terms of biological role, one of the proteins that surrounds the polypeptide exit tunnel on the outside of the subunit. The polypeptide is Large ribosomal subunit protein uL24 (Mycoplasma mobile (strain ATCC 43663 / 163K / NCTC 11711) (Mesomycoplasma mobile)).